A 181-amino-acid polypeptide reads, in one-letter code: Inner membrane-spanning protein YciB (181 aa).

The next 5 membrane-spanning stretches (helical) occupy residues 10 to 30 (LIIFFAVYKFFDIYIASGALI), 50 to 70 (MHLITFAMVTVFGTLTLVFHD), 72 to 92 (AFIKWKVTIIYALFALALGVS), 118 to 138 (VTWYWVSFFAICGLVNIYVAF), and 148 to 168 (FKVFGLTALTLINTVITVFYL).

This sequence belongs to the YciB family.

It localises to the cell inner membrane. In terms of biological role, plays a role in cell envelope biogenesis, maintenance of cell envelope integrity and membrane homeostasis. The chain is Inner membrane-spanning protein YciB from Shewanella sp. (strain MR-7).